A 365-amino-acid polypeptide reads, in one-letter code: Phospho-N-acetylmuramoyl-pentapeptide-transferase (365 aa).

Helical transmembrane passes span 19-39, 47-67, 91-111, 115-135, 155-175, 184-204, 224-244, 281-301, and 344-364; these read LLIL…WLLT, AVIL…FGVI, AGTP…VALI, FDPQ…IGWV, LLLQ…TGSP, GNLI…VLVA, AIAF…LMIF, AVGL…IFFV, and TQIV…GFIS.

This sequence belongs to the glycosyltransferase 4 family. MraY subfamily. The cofactor is Mg(2+).

It is found in the cell inner membrane. The catalysed reaction is UDP-N-acetyl-alpha-D-muramoyl-L-alanyl-gamma-D-glutamyl-meso-2,6-diaminopimeloyl-D-alanyl-D-alanine + di-trans,octa-cis-undecaprenyl phosphate = di-trans,octa-cis-undecaprenyl diphospho-N-acetyl-alpha-D-muramoyl-L-alanyl-D-glutamyl-meso-2,6-diaminopimeloyl-D-alanyl-D-alanine + UMP. Its pathway is cell wall biogenesis; peptidoglycan biosynthesis. Catalyzes the initial step of the lipid cycle reactions in the biosynthesis of the cell wall peptidoglycan: transfers peptidoglycan precursor phospho-MurNAc-pentapeptide from UDP-MurNAc-pentapeptide onto the lipid carrier undecaprenyl phosphate, yielding undecaprenyl-pyrophosphoryl-MurNAc-pentapeptide, known as lipid I. The chain is Phospho-N-acetylmuramoyl-pentapeptide-transferase from Gloeothece citriformis (strain PCC 7424) (Cyanothece sp. (strain PCC 7424)).